A 944-amino-acid chain; its full sequence is Isoleucine--tRNA ligase (944 aa).

The short motif at 58-68 (PYANGSIHIGH) is the 'HIGH' region element. Glutamate 563 is a binding site for L-isoleucyl-5'-AMP. Positions 604 to 608 (KMSKS) match the 'KMSKS' region motif. Lysine 607 lines the ATP pocket. Positions 907, 910, 927, and 930 each coordinate Zn(2+).

This sequence belongs to the class-I aminoacyl-tRNA synthetase family. IleS type 1 subfamily. In terms of assembly, monomer. It depends on Zn(2+) as a cofactor.

It localises to the cytoplasm. The enzyme catalyses tRNA(Ile) + L-isoleucine + ATP = L-isoleucyl-tRNA(Ile) + AMP + diphosphate. In terms of biological role, catalyzes the attachment of isoleucine to tRNA(Ile). As IleRS can inadvertently accommodate and process structurally similar amino acids such as valine, to avoid such errors it has two additional distinct tRNA(Ile)-dependent editing activities. One activity is designated as 'pretransfer' editing and involves the hydrolysis of activated Val-AMP. The other activity is designated 'posttransfer' editing and involves deacylation of mischarged Val-tRNA(Ile). The protein is Isoleucine--tRNA ligase of Salmonella typhi.